Consider the following 693-residue polypeptide: Lamina-associated polypeptide 2, isoforms alpha/zeta (693 aa).

In terms of domain architecture, LEM-like spans 5–48; sequence LEDPSVLTKDKLKSELVANNVTLPAGEQRKDVYVQLYLQHLTAR. Disordered stretches follow at residues 48–113, 148–211, and 227–270; these read RNRP…DVTE, LREQ…LAST, and TRPP…KLAP. The interval 49–107 is linker; that stretch reads NRPPLAAGANSKGPPDFSSDEEREPTPVLGSGASVGRGRGAVGRKATKKTDKPRLEDKD. Residues Ser59, Ser66, and Ser67 each carry the phosphoserine modification. Phosphothreonine is present on Thr74. Phosphoserine is present on residues Ser79 and Ser82. Arg85 and Arg87 each carry omega-N-methylarginine. The span at 96-105 shows a compositional bias: basic and acidic residues; the sequence is KKTDKPRLED. The LEM domain maps to 108-152; sequence DLDVTELSNEELLDQLVRYGVNPGPIVGTTRKLYEKKLLKLREQG. Thr153 bears the Phosphothreonine mark. The span at 154-177 shows a compositional bias: polar residues; it reads ESRSSTPLPTVSSSAENTRQNGSN. Residues Ser155 and Ser158 each carry the phosphoserine modification. Phosphothreonine occurs at positions 159 and 163. A phosphoserine mark is found at Ser165 and Ser167. The segment covering 178–190 has biased composition (basic and acidic residues); the sequence is DSDRYSDNDEGKK. The Nuclear localization signal signature appears at 190–196; sequence KKEHKKV. Position 206 is an N6-acetyllysine (Ser206). The span at 245-254 shows a compositional bias: basic and acidic residues; the sequence is TKRDPPRETC. Ser310 bears the Phosphoserine mark. Arg329 carries the omega-N-methylarginine modification. Positions 332–351 are disordered; that stretch reads KSRAQPLRAEEPGVSDQSVF. Phosphoserine is present on residues Ser349, Ser352, Ser368, Ser420, and Ser422. Low complexity predominate over residues 412–422; sequence QSSYQDSESLS. The disordered stretch occupies residues 412–442; that stretch reads QSSYQDSESLSPPRKVPRLSEKPARGGDSGS. A coiled-coil region spans residues 557–656; that stretch reads TESCDKHLDL…MGRRYLWLKD (100 aa). Lys655 bears the N6-acetyllysine mark.

Belongs to the LEM family. Homooligomer. Interacts with LMNA, BANF1 and RB1 and with chromosomes. Associates directly or indirectly with lamins at specific cell-cycle stages. Interacts with CMTM6. Post-translationally, phosphorylated in a mitose-specific manner.

The protein localises to the nucleus. It is found in the chromosome. May be involved in the structural organization of the nucleus and in the post-mitotic nuclear assembly. Plays an important role, together with LMNA, in the nuclear anchorage of RB1. This Mus musculus (Mouse) protein is Lamina-associated polypeptide 2, isoforms alpha/zeta (Tmpo).